A 227-amino-acid chain; its full sequence is Probable septum site-determining protein MinC (227 aa).

The protein belongs to the MinC family. Interacts with MinD and FtsZ.

In terms of biological role, cell division inhibitor that blocks the formation of polar Z ring septums. Rapidly oscillates between the poles of the cell to destabilize FtsZ filaments that have formed before they mature into polar Z rings. Prevents FtsZ polymerization. The polypeptide is Probable septum site-determining protein MinC (Clostridioides difficile (strain 630) (Peptoclostridium difficile)).